A 355-amino-acid polypeptide reads, in one-letter code: Protein RecA (355 aa).

67 to 74 serves as a coordination point for ATP; sequence GPESSGKT. The segment at 331-355 is disordered; that stretch reads NQDDKPDFTPAAHEVDEGSEAKENF.

It belongs to the RecA family.

It localises to the cytoplasm. Functionally, can catalyze the hydrolysis of ATP in the presence of single-stranded DNA, the ATP-dependent uptake of single-stranded DNA by duplex DNA, and the ATP-dependent hybridization of homologous single-stranded DNAs. It interacts with LexA causing its activation and leading to its autocatalytic cleavage. This is Protein RecA from Erwinia tasmaniensis (strain DSM 17950 / CFBP 7177 / CIP 109463 / NCPPB 4357 / Et1/99).